The following is a 55-amino-acid chain: Large ribosomal subunit protein bL33 (55 aa).

This sequence belongs to the bacterial ribosomal protein bL33 family.

This is Large ribosomal subunit protein bL33 from Vibrio atlanticus (strain LGP32) (Vibrio splendidus (strain Mel32)).